We begin with the raw amino-acid sequence, 178 residues long: Oligoribonuclease (178 aa).

The Exonuclease domain maps to 7–168; it reads LIWIDLEMTG…DDIRESIAEL (162 aa). Tyrosine 128 is a catalytic residue.

This sequence belongs to the oligoribonuclease family.

It localises to the cytoplasm. Functionally, 3'-to-5' exoribonuclease specific for small oligoribonucleotides. This chain is Oligoribonuclease, found in Francisella tularensis subsp. novicida (strain U112).